The chain runs to 126 residues: Aspartate 1-decarboxylase (126 aa).

The Schiff-base intermediate with substrate; via pyruvic acid role is filled by S25. Pyruvic acid (Ser) is present on S25. T57 contacts substrate. The active-site Proton donor is the Y58. Residue 73-75 (GAA) participates in substrate binding.

This sequence belongs to the PanD family. As to quaternary structure, heterooctamer of four alpha and four beta subunits. Pyruvate is required as a cofactor. Is synthesized initially as an inactive proenzyme, which is activated by self-cleavage at a specific serine bond to produce a beta-subunit with a hydroxyl group at its C-terminus and an alpha-subunit with a pyruvoyl group at its N-terminus.

It localises to the cytoplasm. It carries out the reaction L-aspartate + H(+) = beta-alanine + CO2. Its pathway is cofactor biosynthesis; (R)-pantothenate biosynthesis; beta-alanine from L-aspartate: step 1/1. Its function is as follows. Catalyzes the pyruvoyl-dependent decarboxylation of aspartate to produce beta-alanine. This is Aspartate 1-decarboxylase from Sodalis glossinidius (strain morsitans).